Here is a 398-residue protein sequence, read N- to C-terminus: Aspartate aminotransferase (398 aa).

Positions 36, 132, and 185 each coordinate L-aspartate. Residue Lys248 is modified to N6-(pyridoxal phosphate)lysine. Arg376 is a binding site for L-aspartate.

Belongs to the class-I pyridoxal-phosphate-dependent aminotransferase family. As to quaternary structure, homodimer. Requires pyridoxal 5'-phosphate as cofactor.

It is found in the cytoplasm. It catalyses the reaction L-aspartate + 2-oxoglutarate = oxaloacetate + L-glutamate. The sequence is that of Aspartate aminotransferase (aspC) from Pseudomonas aeruginosa (strain ATCC 15692 / DSM 22644 / CIP 104116 / JCM 14847 / LMG 12228 / 1C / PRS 101 / PAO1).